We begin with the raw amino-acid sequence, 146 residues long: Small ribosomal subunit protein uS5 (146 aa).

One can recognise an S5 DRBM domain in the interval 8-71; the sequence is FQEAIVKIGR…DDAFKSLVTV (64 aa).

The protein belongs to the universal ribosomal protein uS5 family. As to quaternary structure, part of the 30S ribosomal subunit. Contacts proteins S4 and S8.

In terms of biological role, with S4 and S12 plays an important role in translational accuracy. Its function is as follows. Located at the back of the 30S subunit body where it stabilizes the conformation of the head with respect to the body. The chain is Small ribosomal subunit protein uS5 from Aliarcobacter butzleri (strain RM4018) (Arcobacter butzleri).